The following is a 625-amino-acid chain: Dopamine beta-hydroxylase (625 aa).

At 1-9 (MQVPSPSAR) the chain is on the cytoplasmic side. The chain crosses the membrane as a helical; Signal-anchor for type II membrane protein span at residues 10–30 (EAASMYGTAVAVFLVLLVAVL). Residues 31–625 (QGLAPPESPL…TVVNIGGGKV (595 aa)) lie on the Intragranular side of the membrane. The DOMON domain maps to 50-166 (GDLELSWDVS…GTVHLVYGVL (117 aa)). 6 disulfides stabilise this stretch: cysteine 147-cysteine 604, cysteine 224-cysteine 275, cysteine 261-cysteine 287, cysteine 382-cysteine 495, cysteine 386-cysteine 573, and cysteine 458-cysteine 480. Residue asparagine 177 is glycosylated (N-linked (GlcNAc...) asparagine). Tyrosine 222 is a catalytic residue. 2 residues coordinate Cu(2+): histidine 254 and histidine 255. Asparagine 315 carries N-linked (GlcNAc...) asparagine glycosylation. Cu(2+)-binding residues include histidine 325, histidine 404, histidine 406, and methionine 479. Residue histidine 404 is part of the active site. Asparagine 574 carries an N-linked (GlcNAc...) asparagine glycan.

Belongs to the copper type II ascorbate-dependent monooxygenase family. In terms of assembly, homotetramer; composed of two disulfide-linked dimers. It depends on Cu(2+) as a cofactor. Proteolytic cleavage after the membrane-anchor leads to the release of the soluble form. In terms of processing, N-glycosylated.

The protein resides in the cytoplasmic vesicle. It is found in the secretory vesicle lumen. Its subcellular location is the secretory vesicle. The protein localises to the chromaffin granule lumen. It localises to the secreted. The protein resides in the secretory vesicle membrane. It is found in the chromaffin granule membrane. The enzyme catalyses dopamine + 2 L-ascorbate + O2 = (R)-noradrenaline + 2 monodehydro-L-ascorbate radical + H2O. The protein operates within catecholamine biosynthesis; (R)-noradrenaline biosynthesis; (R)-noradrenaline from dopamine: step 1/1. Functionally, catalyzes the hydroxylation of dopamine to noradrenaline (also known as norepinephrine), and is thus vital for regulation of these neurotransmitters. The sequence is that of Dopamine beta-hydroxylase (DBH) from Canis lupus familiaris (Dog).